Consider the following 356-residue polypeptide: Protein RecA (356 aa).

77-84 (GPESSGKT) is an ATP binding site.

This sequence belongs to the RecA family.

It localises to the cytoplasm. Its function is as follows. Can catalyze the hydrolysis of ATP in the presence of single-stranded DNA, the ATP-dependent uptake of single-stranded DNA by duplex DNA, and the ATP-dependent hybridization of homologous single-stranded DNAs. It interacts with LexA causing its activation and leading to its autocatalytic cleavage. The chain is Protein RecA from Caulobacter vibrioides (strain ATCC 19089 / CIP 103742 / CB 15) (Caulobacter crescentus).